The sequence spans 232 residues: Flavin-dependent thymidylate synthase (232 aa).

The region spanning 1–204 (MKIALLQHTP…PTIFRDAGPG (204 aa)) is the ThyX domain. Residues Ser-55, 79 to 81 (RHR), and Gln-87 each bind FAD. DUMP-binding positions include 76–79 (QLVR), 87–91 (QQSQR), and Arg-143. Positions 79–89 (RHRIASYSQQS) match the ThyX motif motif. Residues 159-161 (NAR) and His-165 contribute to the FAD site. A dUMP-binding site is contributed by Arg-170. Residue Arg-170 is the Involved in ionization of N3 of dUMP, leading to its activation of the active site.

It belongs to the thymidylate synthase ThyX family. Homotetramer. The cofactor is FAD.

It catalyses the reaction dUMP + (6R)-5,10-methylene-5,6,7,8-tetrahydrofolate + NADPH + H(+) = dTMP + (6S)-5,6,7,8-tetrahydrofolate + NADP(+). The protein operates within pyrimidine metabolism; dTTP biosynthesis. Its function is as follows. Catalyzes the reductive methylation of 2'-deoxyuridine-5'-monophosphate (dUMP) to 2'-deoxythymidine-5'-monophosphate (dTMP) while utilizing 5,10-methylenetetrahydrofolate (mTHF) as the methyl donor, and NADPH and FADH(2) as the reductant. In Geobacter sulfurreducens (strain ATCC 51573 / DSM 12127 / PCA), this protein is Flavin-dependent thymidylate synthase.